Here is a 245-residue protein sequence, read N- to C-terminus: Rhamnogalacturonan acetylesterase (245 aa).

The signal sequence occupies residues 1–17; it reads MKSIALTSLSLLPSALA. Ser26 serves as the catalytic Nucleophile. Cys100 and Cys108 are oxidised to a cystine. Active-site residues include Asp204 and His207. Cys226 and Cys244 are oxidised to a cystine.

Belongs to the 'GDSL' lipolytic enzyme family.

It is found in the secreted. The enzyme catalyses Hydrolytic cleavage of 2-O-acetyl- or 3-O-acetyl groups of alpha-D-galacturonic acid in rhamnogalacturonan I.. Its function is as follows. Plays a key role in the degradation of rhamnogalacturonan in the cell wall. Involved in degradation of pectin. The chain is Rhamnogalacturonan acetylesterase from Emericella nidulans (strain FGSC A4 / ATCC 38163 / CBS 112.46 / NRRL 194 / M139) (Aspergillus nidulans).